The following is an 88-amino-acid chain: MLTNTDRQQVIAQYQRAPGDTGSPEVQIALLSARINDLQAHFKEHKGDHHSRRGLIRMVNQRRKLLDYLKRKDLTRYASLISELGLRR.

Polar residues predominate over residues 1–12 (MLTNTDRQQVIA). The disordered stretch occupies residues 1–23 (MLTNTDRQQVIAQYQRAPGDTGS).

The protein belongs to the universal ribosomal protein uS15 family. Part of the 30S ribosomal subunit. Forms a bridge to the 50S subunit in the 70S ribosome, contacting the 23S rRNA.

Functionally, one of the primary rRNA binding proteins, it binds directly to 16S rRNA where it helps nucleate assembly of the platform of the 30S subunit by binding and bridging several RNA helices of the 16S rRNA. Its function is as follows. Forms an intersubunit bridge (bridge B4) with the 23S rRNA of the 50S subunit in the ribosome. The sequence is that of Small ribosomal subunit protein uS15 from Psychrobacter sp. (strain PRwf-1).